Reading from the N-terminus, the 360-residue chain is Phenylalanine--tRNA ligase alpha subunit (360 aa).

Residue Glu260 participates in Mg(2+) binding.

This sequence belongs to the class-II aminoacyl-tRNA synthetase family. Phe-tRNA synthetase alpha subunit type 1 subfamily. Tetramer of two alpha and two beta subunits. Requires Mg(2+) as cofactor.

Its subcellular location is the cytoplasm. It catalyses the reaction tRNA(Phe) + L-phenylalanine + ATP = L-phenylalanyl-tRNA(Phe) + AMP + diphosphate + H(+). In Rhizobium etli (strain CIAT 652), this protein is Phenylalanine--tRNA ligase alpha subunit.